Here is a 633-residue protein sequence, read N- to C-terminus: MTTPKKTAKTSGNEARELADLSEDIGICFKYPNSERVYLQGSRDDIRVPLREIRQDDTYTAQGTEANPPIPVYDTSGVYGDPAAHIDLKQGLPHIRTAWLDERGDTEILPKLSSEYGIERAHDPKTAHLRFNQITRPRRAKSGSNVTQLHYARQGIITPEMEFVAIRERLKLDELSQKPEYAKLLEQHAGQSFGANIPTHPDQITPEFVRQEIAAGRAIIPANINHPELEPMIIGRNFRVKINGNLGNSAVTSSLTEEVEKMVWSLRWGADTIMDLSTGAHIHETREWIIRNAPVPIGTVPIYQALEKTGGIAEDLTWDLFRDTLIEQAEQGVDYFTIHAGVLLRYVPMTANRLTGIVSRGGSIMAKWCLAHHRENFLYTHFDEICEIMKAYDVSFSLGDGLRPGCIADANDESQFAELHTLGELTDKAWKHDVQVMIEGPGHVPLQRVKENMTEELQHCFEAPFYTLGPLVTDIAPGYDHITSGIGAANIGWYGTAMLCYVTPKEHLGLPDKEDVRTGIITYKLAAHAADLAKGWPGAQLRDNALSKARFEFRWRDQFRLSLDPERAESFHDETLPAEGAKIAHFCSMCGPKFCSMKITQEVRDYADKQKAQRQGMEEKAVEFVKKGAKIYS.

Residues Asn245, Met274, Tyr303, His339, 359–361, 400–403, and Glu439 contribute to the substrate site; these read SRG and DGLR. A Zn(2+)-binding site is contributed by His443. Tyr466 lines the substrate pocket. His507 contacts Zn(2+). Residues Cys587, Cys590, and Cys595 each contribute to the [4Fe-4S] cluster site.

This sequence belongs to the ThiC family. Homodimer. [4Fe-4S] cluster is required as a cofactor.

The catalysed reaction is 5-amino-1-(5-phospho-beta-D-ribosyl)imidazole + S-adenosyl-L-methionine = 4-amino-2-methyl-5-(phosphooxymethyl)pyrimidine + CO + 5'-deoxyadenosine + formate + L-methionine + 3 H(+). Its pathway is cofactor biosynthesis; thiamine diphosphate biosynthesis. In terms of biological role, catalyzes the synthesis of the hydroxymethylpyrimidine phosphate (HMP-P) moiety of thiamine from aminoimidazole ribotide (AIR) in a radical S-adenosyl-L-methionine (SAM)-dependent reaction. The protein is Phosphomethylpyrimidine synthase of Neisseria meningitidis serogroup B (strain ATCC BAA-335 / MC58).